The primary structure comprises 150 residues: Large ribosomal subunit protein bL9 (150 aa).

It belongs to the bacterial ribosomal protein bL9 family.

Its function is as follows. Binds to the 23S rRNA. The polypeptide is Large ribosomal subunit protein bL9 (Burkholderia vietnamiensis (strain G4 / LMG 22486) (Burkholderia cepacia (strain R1808))).